We begin with the raw amino-acid sequence, 203 residues long: Ribosomal RNA small subunit methyltransferase G (203 aa).

S-adenosyl-L-methionine is bound by residues Gly73, Leu78, 124–125, and Arg139; that span reads VE.

Belongs to the methyltransferase superfamily. RNA methyltransferase RsmG family.

It localises to the cytoplasm. It carries out the reaction guanosine(527) in 16S rRNA + S-adenosyl-L-methionine = N(7)-methylguanosine(527) in 16S rRNA + S-adenosyl-L-homocysteine. Its function is as follows. Specifically methylates the N7 position of guanine in position 527 of 16S rRNA. This is Ribosomal RNA small subunit methyltransferase G from Haemophilus influenzae (strain 86-028NP).